The sequence spans 486 residues: Nuclear distribution protein PAC1 (486 aa).

The stretch at 66–99 (STVLRLQKKIIDLENEISNLNNIINSTNSDNNGI) forms a coiled coil. WD repeat units lie at residues 119–158 (QCENIVTTVKLHPNLPLVLNGCNDGNLYIWNISNDDNTIP), 164–205 (AHTR…RTLN), 206–246 (GHEH…SLKS), 249–291 (GHSE…GVAM), 294–328 (GHSHVVETVKFLPSLQANKILDEYITKNTEQFPTI), 329–368 (PLELLKDKTYNQLGFKYCITASRDNTIKLWLIPPPTIAPH), 389–428 (GHSSWVKSLCVHPNGKFIISGSDDKTIKFWDLSGLLETGY), and 437–483 (GHDG…NSIK).

It belongs to the WD repeat LIS1/nudF family. Self-associates. Interacts with NDL1 and dynein.

The protein localises to the cytoplasm. The protein resides in the cytoskeleton. It is found in the spindle pole. Functionally, positively regulates the activity of the minus-end directed microtubule motor protein dynein. Plays a central role in positioning the mitotic spindle at the bud neck during cell division. Targets cytoplasmic dynein to microtubule plus ends, thereby promoting dynein-mediated microtubule sliding along the bud cortex and consequently the movement of the mitotic spindle to the bud neck. This chain is Nuclear distribution protein PAC1, found in Candida albicans (strain SC5314 / ATCC MYA-2876) (Yeast).